Consider the following 139-residue polypeptide: uncharacterized protein (139 aa).

This is an uncharacterized protein from Galliformes (FAdV-1).